Here is a 494-residue protein sequence, read N- to C-terminus: Probable cytosol aminopeptidase (494 aa).

Lys260 and Asp265 together coordinate Mn(2+). The active site involves Lys272. 3 residues coordinate Mn(2+): Asp283, Asp342, and Glu344. Residue Arg346 is part of the active site.

Belongs to the peptidase M17 family. It depends on Mn(2+) as a cofactor.

The protein localises to the cytoplasm. The enzyme catalyses Release of an N-terminal amino acid, Xaa-|-Yaa-, in which Xaa is preferably Leu, but may be other amino acids including Pro although not Arg or Lys, and Yaa may be Pro. Amino acid amides and methyl esters are also readily hydrolyzed, but rates on arylamides are exceedingly low.. It catalyses the reaction Release of an N-terminal amino acid, preferentially leucine, but not glutamic or aspartic acids.. Its function is as follows. Presumably involved in the processing and regular turnover of intracellular proteins. Catalyzes the removal of unsubstituted N-terminal amino acids from various peptides. This is Probable cytosol aminopeptidase from Bacillus thuringiensis (strain Al Hakam).